The sequence spans 662 residues: DNA topoisomerase 4 subunit B (662 aa).

Residues Tyr20, Asn60, Asp87, 129–135, and Lys359 contribute to the ATP site; that span reads GLHGVGI. The Toprim domain occupies 439-553; that stretch reads TELFIVEGDS…EGHLYLAKPP (115 aa). Residues Glu445, Asp518, and Asp520 each coordinate Mg(2+).

Belongs to the type II topoisomerase family. ParE type 1 subfamily. As to quaternary structure, heterotetramer composed of ParC and ParE. The cofactor is Mg(2+). Mn(2+) is required as a cofactor. It depends on Ca(2+) as a cofactor.

The catalysed reaction is ATP-dependent breakage, passage and rejoining of double-stranded DNA.. In terms of biological role, topoisomerase IV is essential for chromosome segregation. It relaxes supercoiled DNA. Performs the decatenation events required during the replication of a circular DNA molecule. This chain is DNA topoisomerase 4 subunit B, found in Rickettsia felis (strain ATCC VR-1525 / URRWXCal2) (Rickettsia azadi).